A 365-amino-acid polypeptide reads, in one-letter code: Peptide chain release factor 1 (365 aa).

N5-methylglutamine is present on glutamine 240.

This sequence belongs to the prokaryotic/mitochondrial release factor family. In terms of processing, methylated by PrmC. Methylation increases the termination efficiency of RF1.

The protein resides in the cytoplasm. Its function is as follows. Peptide chain release factor 1 directs the termination of translation in response to the peptide chain termination codons UAG and UAA. This Bifidobacterium animalis subsp. lactis (strain AD011) protein is Peptide chain release factor 1.